Consider the following 715-residue polypeptide: Polyribonucleotide nucleotidyltransferase (715 aa).

Residues aspartate 488 and aspartate 494 each coordinate Mg(2+). The 60-residue stretch at 555-614 (PKIETIKIPVDKIREVIGSGGKVIREIVEKTGAKIDIGEDGTIKIAAAEQTKIDAAKEWI) folds into the KH domain. The region spanning 624–692 (GQIYTGKVVK…DRGKTRLSMK (69 aa)) is the S1 motif domain. Residues 692-715 (KVVDQETGEDLSKSNEKAEEPADA) form a disordered region. Residues 701–715 (DLSKSNEKAEEPADA) show a composition bias toward basic and acidic residues.

Belongs to the polyribonucleotide nucleotidyltransferase family. Mg(2+) is required as a cofactor.

It localises to the cytoplasm. It catalyses the reaction RNA(n+1) + phosphate = RNA(n) + a ribonucleoside 5'-diphosphate. Functionally, involved in mRNA degradation. Catalyzes the phosphorolysis of single-stranded polyribonucleotides processively in the 3'- to 5'-direction. In Phenylobacterium zucineum (strain HLK1), this protein is Polyribonucleotide nucleotidyltransferase.